The chain runs to 399 residues: Formate-dependent phosphoribosylglycinamide formyltransferase (399 aa).

N(1)-(5-phospho-beta-D-ribosyl)glycinamide contacts are provided by residues 22-23 and Glu82; that span reads EL. Residues Arg114, Lys155, 160-165, 195-198, and Glu203 each bind ATP; these read SSGKGQ and EKMI. One can recognise an ATP-grasp domain in the interval 119 to 308; sequence RLAAETLHLL…EFALHVRAFL (190 aa). Mg(2+)-binding residues include Glu267 and Glu279. Residues Asp286, Lys355, and 362 to 363 each bind N(1)-(5-phospho-beta-D-ribosyl)glycinamide; that span reads RR.

This sequence belongs to the PurK/PurT family. As to quaternary structure, homodimer.

It catalyses the reaction N(1)-(5-phospho-beta-D-ribosyl)glycinamide + formate + ATP = N(2)-formyl-N(1)-(5-phospho-beta-D-ribosyl)glycinamide + ADP + phosphate + H(+). It functions in the pathway purine metabolism; IMP biosynthesis via de novo pathway; N(2)-formyl-N(1)-(5-phospho-D-ribosyl)glycinamide from N(1)-(5-phospho-D-ribosyl)glycinamide (formate route): step 1/1. Its function is as follows. Involved in the de novo purine biosynthesis. Catalyzes the transfer of formate to 5-phospho-ribosyl-glycinamide (GAR), producing 5-phospho-ribosyl-N-formylglycinamide (FGAR). Formate is provided by PurU via hydrolysis of 10-formyl-tetrahydrofolate. This Proteus mirabilis (strain HI4320) protein is Formate-dependent phosphoribosylglycinamide formyltransferase.